Consider the following 184-residue polypeptide: H(2)/formate:CoB-CoM heterodisulfide,ferredoxin reductase subunit C2 (184 aa).

4Fe-4S ferredoxin-type domains follow at residues 24 to 54 (GEKE…AYRT) and 65 to 97 (IDSV…TEII). [4Fe-4S] cluster contacts are provided by cysteine 34, cysteine 37, cysteine 40, cysteine 44, cysteine 77, cysteine 80, cysteine 83, and cysteine 87.

It belongs to the HdrC family. In terms of assembly, the heterodisulfide reductase is composed of three subunits; HdrA, HdrB and HdrC. B1 and B2 subunits are interchangeable, as are the C1 and C2 subunits. The heterodisulfide reductase forms a supercomplex with formylmethanofuran dehydrogenase (Fwd), F(420)-non-reducing hydrogenase (Vhu) and formate dehydrogenase (Fdh). It depends on [4Fe-4S] cluster as a cofactor.

The catalysed reaction is coenzyme B + coenzyme M + 2 reduced [2Fe-2S]-[ferredoxin] + 2 H(+) = coenzyme M-coenzyme B heterodisulfide + 2 H2 + 2 oxidized [2Fe-2S]-[ferredoxin]. It catalyses the reaction coenzyme B + coenzyme M + 2 reduced [2Fe-2S]-[ferredoxin] + 2 CO2 = coenzyme M-coenzyme B heterodisulfide + 2 formate + 2 oxidized [2Fe-2S]-[ferredoxin]. The protein operates within cofactor metabolism; coenzyme M-coenzyme B heterodisulfide reduction; coenzyme B and coenzyme M from coenzyme M-coenzyme B heterodisulfide: step 1/1. Its function is as follows. Part of a complex that catalyzes the reversible reduction of CoM-S-S-CoB to the thiol-coenzymes H-S-CoM (coenzyme M) and H-S-CoB (coenzyme B). The protein is H(2)/formate:CoB-CoM heterodisulfide,ferredoxin reductase subunit C2 of Methanococcus maripaludis (strain DSM 14266 / JCM 13030 / NBRC 101832 / S2 / LL).